Consider the following 148-residue polypeptide: Deoxyuridine 5'-triphosphate nucleotidohydrolase (148 aa).

Substrate is bound by residues 67 to 69 (RSG), N80, 84 to 86 (LID), and M94.

This sequence belongs to the dUTPase family. Requires Mg(2+) as cofactor.

It carries out the reaction dUTP + H2O = dUMP + diphosphate + H(+). It participates in pyrimidine metabolism; dUMP biosynthesis; dUMP from dCTP (dUTP route): step 2/2. In terms of biological role, this enzyme is involved in nucleotide metabolism: it produces dUMP, the immediate precursor of thymidine nucleotides and it decreases the intracellular concentration of dUTP so that uracil cannot be incorporated into DNA. In Paraburkholderia xenovorans (strain LB400), this protein is Deoxyuridine 5'-triphosphate nucleotidohydrolase.